Reading from the N-terminus, the 119-residue chain is uncharacterized protein (119 aa).

The disordered stretch occupies residues 1–20 (MPHLAAEAHTWPPHISHSTL). A helical membrane pass occupies residues 74-94 (LLFVVHQGHIGTGLIVFIICW).

Its subcellular location is the membrane. This is an uncharacterized protein from Saccharomyces cerevisiae (strain ATCC 204508 / S288c) (Baker's yeast).